The sequence spans 235 residues: Glutathione S-transferase 1 (235 aa).

The GST N-terminal domain maps to 36-113 (EKYTLTYFNG…LLGGRFGLLG (78 aa)). Glutathione contacts are provided by residues Tyr42, Trp73, Lys77, Val85, and 97–98 (ES). In terms of domain architecture, GST C-terminal spans 115 to 235 (NDWEEAKIMA…WIKKRPKTYF (121 aa)).

The protein belongs to the GST superfamily. Homodimer.

The enzyme catalyses RX + glutathione = an S-substituted glutathione + a halide anion + H(+). This chain is Glutathione S-transferase 1 (GST1), found in Onchocerca volvulus.